A 354-amino-acid chain; its full sequence is S-adenosylmethionine:tRNA ribosyltransferase-isomerase (354 aa).

The protein belongs to the QueA family. As to quaternary structure, monomer.

It is found in the cytoplasm. It catalyses the reaction 7-aminomethyl-7-carbaguanosine(34) in tRNA + S-adenosyl-L-methionine = epoxyqueuosine(34) in tRNA + adenine + L-methionine + 2 H(+). It participates in tRNA modification; tRNA-queuosine biosynthesis. Its function is as follows. Transfers and isomerizes the ribose moiety from AdoMet to the 7-aminomethyl group of 7-deazaguanine (preQ1-tRNA) to give epoxyqueuosine (oQ-tRNA). The chain is S-adenosylmethionine:tRNA ribosyltransferase-isomerase from Salmonella typhi.